The primary structure comprises 352 residues: C-X-C chemokine receptor type 4 (352 aa).

Residues 1 to 21 form an important for chemokine binding and signaling region; sequence MEGISIYTSDNYTEEMGSGDY. Over 1 to 38 the chain is Extracellular; that stretch reads MEGISIYTSDNYTEEMGSGDYDSIKEPCFREENAHFNR. Tyrosine 7 carries the sulfotyrosine modification. Residue asparagine 11 is glycosylated (N-linked (GlcNAc...) asparagine). At tyrosine 12 the chain carries Sulfotyrosine. Residue serine 18 is glycosylated (O-linked (Xyl...) (chondroitin sulfate) serine). Position 21 is a sulfotyrosine (tyrosine 21). 2 disulfide bridges follow: cysteine 28–cysteine 274 and cysteine 109–cysteine 186. Residues 39 to 63 form a helical membrane-spanning segment; sequence IFLPTIYSIIFLTGIVGNGLVILVM. Residues 64–77 are Cytoplasmic-facing; the sequence is GYQKKLRSMTDKYR. A helical transmembrane segment spans residues 78–99; that stretch reads LHLSVADLLFVITLPFWAVDAV. The chemokine binding stretch occupies residues 94–97; it reads WAVD. Residues 100–110 are Extracellular-facing; that stretch reads ANWYFGNFLCK. Residues 111 to 130 traverse the membrane as a helical segment; sequence AVHVIYTVNLYSSVLILAFI. The tract at residues 113–117 is chemokine binding; sequence HVIYT. Over 131-154 the chain is Cytoplasmic; that stretch reads SLDRYLAIVHATNSQRPRKLLAEK. The Important for signaling signature appears at 133 to 135; sequence DRY. The tract at residues 135–147 is involved in dimerization; when bound to chemokine; that stretch reads YLAIVHATNSQRP. A helical transmembrane segment spans residues 155-174; sequence VVYVGVWIPALLLTIPDFIF. The Extracellular segment spans residues 175-195; it reads ASVSEADDRYICDRFYPNDLW. The segment at 186-190 is chemokine binding, important for signaling; the sequence is CDRFY. Positions 191-210 are involved in dimerization; sequence PNDLWVVVFQFQHIMVGLIL. The helical transmembrane segment at 196–216 threads the bilayer; that stretch reads VVVFQFQHIMVGLILPGIVIL. Topologically, residues 217–241 are cytoplasmic; it reads SCYCIIISKLSHSKGHQKRKALKTT. A helical transmembrane segment spans residues 242-261; the sequence is VILILAFFACWLPYYIGISI. Residues 262-282 lie on the Extracellular side of the membrane; sequence DSFILLEIIKQGCEFENTVHK. The involved in dimerization stretch occupies residues 266-268; it reads LLE. A helical transmembrane segment spans residues 283–302; sequence WISITEALAFFHCCLNPILY. At 303–352 the chain is on the cytoplasmic side; it reads AFLGAKFKTSAQHALTSVSRGSSLKILSKGKRGGHSSVSTESESSSFHSS. A phosphoserine mark is found at serine 319 and serine 321. A phosphoserine; by PKC and GRK6 mark is found at serine 324 and serine 325. Positions 329–352 are disordered; the sequence is LSKGKRGGHSSVSTESESSSFHSS. Serine 330 is subject to Phosphoserine; by GRK6. Lysine 331 participates in a covalent cross-link: Glycyl lysine isopeptide (Lys-Gly) (interchain with G-Cter in ubiquitin). Low complexity predominate over residues 337–352; that stretch reads HSSVSTESESSSFHSS. A Phosphoserine; by GRK6 modification is found at serine 339. Serine 348 and serine 351 each carry phosphoserine.

Belongs to the G-protein coupled receptor 1 family. Monomer. Can form homodimers. Interacts with CD164. Interacts with ARRB2; the interaction is dependent on the C-terminal phosphorylation of CXCR4 and allows activation of MAPK1 and MAPK3. Interacts with ARR3; the interaction is dependent on the C-terminal phosphorylation of CXCR4 and modulates calcium mobilization. Interacts with RNF113A; the interaction, enhanced by CXCL12, promotes CXCR4 ubiquitination and subsequent degradation. Interacts (via the cytoplasmic C-terminal) with ITCH (via the WW domains I and II); the interaction, enhanced by CXCL12, promotes CXCR4 ubiquitination and leads to its degradation. Interacts with extracellular ubiquitin. Interacts with DBN1; this interaction is enhanced by antigenic stimulation. Following LPS binding, may form a complex with GDF5, HSP90AA1 and HSPA8. Phosphorylated on agonist stimulation. Rapidly phosphorylated on serine and threonine residues in the C-terminal. Phosphorylation at Ser-324 and Ser-325 leads to recruitment of ITCH, ubiquitination and protein degradation. In terms of processing, ubiquitinated after ligand binding, leading to its degradation. Ubiquitinated by ITCH at the cell membrane on agonist stimulation. The ubiquitin-dependent mechanism, endosomal sorting complex required for transport (ESCRT), then targets CXCR4 for lysosomal degradation. This process is dependent also on prior Ser-/Thr-phosphorylation in the C-terminal of CXCR4. Also binding of ARRB1 to STAM negatively regulates CXCR4 sorting to lysosomes though modulating ubiquitination of SFR5S. Post-translationally, sulfation is required for efficient binding of CXCL12/SDF-1alpha and promotes its dimerization. O- and N-glycosylated. N-glycosylation can mask coreceptor function. The O-glycosylation chondroitin sulfate attachment does not affect interaction with CXCL12/SDF-1alpha nor its coreceptor activity.

It is found in the cell membrane. It localises to the cell junction. The protein resides in the early endosome. Its subcellular location is the late endosome. The protein localises to the lysosome. In terms of biological role, receptor for the C-X-C chemokine CXCL12/SDF-1 that transduces a signal by increasing intracellular calcium ion levels and enhancing MAPK1/MAPK3 activation. Involved in the AKT signaling cascade. Plays a role in regulation of cell migration, e.g. during wound healing. Acts as a receptor for extracellular ubiquitin; leading to enhanced intracellular calcium ions and reduced cellular cAMP levels. Binds bacterial lipopolysaccharide (LPS) et mediates LPS-induced inflammatory response, including TNF secretion by monocytes. Involved in hematopoiesis and in cardiac ventricular septum formation. Also plays an essential role in vascularization of the gastrointestinal tract, probably by regulating vascular branching and/or remodeling processes in endothelial cells. Involved in cerebellar development. In the CNS, could mediate hippocampal-neuron survival. The sequence is that of C-X-C chemokine receptor type 4 (CXCR4) from Papio anubis (Olive baboon).